The chain runs to 135 residues: 6,7-dimethyl-8-ribityllumazine synthase (135 aa).

5-amino-6-(D-ribitylamino)uracil is bound by residues Phe12, 44 to 46 (AYD), and 68 to 70 (CVI). 73–74 (AT) provides a ligand contact to (2S)-2-hydroxy-3-oxobutyl phosphate. His76 (proton donor) is an active-site residue. Leu101 provides a ligand contact to 5-amino-6-(D-ribitylamino)uracil. Residue Arg116 coordinates (2S)-2-hydroxy-3-oxobutyl phosphate.

It belongs to the DMRL synthase family.

The catalysed reaction is (2S)-2-hydroxy-3-oxobutyl phosphate + 5-amino-6-(D-ribitylamino)uracil = 6,7-dimethyl-8-(1-D-ribityl)lumazine + phosphate + 2 H2O + H(+). It participates in cofactor biosynthesis; riboflavin biosynthesis; riboflavin from 2-hydroxy-3-oxobutyl phosphate and 5-amino-6-(D-ribitylamino)uracil: step 1/2. Catalyzes the formation of 6,7-dimethyl-8-ribityllumazine by condensation of 5-amino-6-(D-ribitylamino)uracil with 3,4-dihydroxy-2-butanone 4-phosphate. This is the penultimate step in the biosynthesis of riboflavin. The protein is 6,7-dimethyl-8-ribityllumazine synthase of Methanoculleus marisnigri (strain ATCC 35101 / DSM 1498 / JR1).